The primary structure comprises 459 residues: Cysteine--tRNA ligase (459 aa).

Cys-28 contributes to the Zn(2+) binding site. The 'HIGH' region motif lies at 30–40; sequence VTIYDLCHIGH. Cys-209, His-234, and Glu-238 together coordinate Zn(2+). The 'KMSKS' region signature appears at 266–270; the sequence is KMSKS. Residue Lys-269 coordinates ATP.

It belongs to the class-I aminoacyl-tRNA synthetase family. As to quaternary structure, monomer. Zn(2+) serves as cofactor.

The protein resides in the cytoplasm. The enzyme catalyses tRNA(Cys) + L-cysteine + ATP = L-cysteinyl-tRNA(Cys) + AMP + diphosphate. The chain is Cysteine--tRNA ligase from Shewanella baltica (strain OS155 / ATCC BAA-1091).